A 221-amino-acid chain; its full sequence is MRQRLTVSESKAIFHKEFPFVVPAVYRRLVDELIVELNLLKNQERFVADGVFAIGLTSIFLDFTKGYKPENQKGILLEAICKCTGFSASNLEQIALEAKKLANGLNTNEIKSLITDNNRDEKESTYKLINKNNHYSRIIAIGIYKLVDMQSNGFNKEEATENSYLDLVNNFGYTKERVEKDVNLYKSSLDKIEKALELIEMNIKDEKRRNKERVSRTKPGQ.

Positions 174–213 (TKERVEKDVNLYKSSLDKIEKALELIEMNIKDEKRRNKER) form a coiled coil.

Belongs to the THF1 family.

May be involved in photosynthetic membrane biogenesis. The protein is Protein Thf1 of Prochlorococcus marinus (strain MIT 9211).